We begin with the raw amino-acid sequence, 358 residues long: UDP-N-acetylglucosamine--N-acetylmuramyl-(pentapeptide) pyrophosphoryl-undecaprenol N-acetylglucosamine transferase (358 aa).

UDP-N-acetyl-alpha-D-glucosamine is bound by residues R166, S196, and Q291.

The protein belongs to the glycosyltransferase 28 family. MurG subfamily.

It is found in the cell membrane. It carries out the reaction Mur2Ac(oyl-L-Ala-gamma-D-Glu-L-Lys-D-Ala-D-Ala)-di-trans,octa-cis-undecaprenyl diphosphate + UDP-N-acetyl-alpha-D-glucosamine = beta-D-GlcNAc-(1-&gt;4)-Mur2Ac(oyl-L-Ala-gamma-D-Glu-L-Lys-D-Ala-D-Ala)-di-trans,octa-cis-undecaprenyl diphosphate + UDP + H(+). Its pathway is cell wall biogenesis; peptidoglycan biosynthesis. Cell wall formation. Catalyzes the transfer of a GlcNAc subunit on undecaprenyl-pyrophosphoryl-MurNAc-pentapeptide (lipid intermediate I) to form undecaprenyl-pyrophosphoryl-MurNAc-(pentapeptide)GlcNAc (lipid intermediate II). The chain is UDP-N-acetylglucosamine--N-acetylmuramyl-(pentapeptide) pyrophosphoryl-undecaprenol N-acetylglucosamine transferase from Staphylococcus saprophyticus subsp. saprophyticus (strain ATCC 15305 / DSM 20229 / NCIMB 8711 / NCTC 7292 / S-41).